Consider the following 189-residue polypeptide: Crossover junction endodeoxyribonuclease RuvC (189 aa).

Catalysis depends on residues aspartate 9, glutamate 70, and aspartate 143. Aspartate 9, glutamate 70, and aspartate 143 together coordinate Mg(2+). Positions 162–178 are enriched in low complexity; that stretch reads MGAASGNSSLTPAQKAW. Residues 162 to 189 form a disordered region; sequence MGAASGNSSLTPAQKAWADAEAKARRKR. Residues 179 to 189 are compositionally biased toward basic and acidic residues; that stretch reads ADAEAKARRKR.

This sequence belongs to the RuvC family. Homodimer which binds Holliday junction (HJ) DNA. The HJ becomes 2-fold symmetrical on binding to RuvC with unstacked arms; it has a different conformation from HJ DNA in complex with RuvA. In the full resolvosome a probable DNA-RuvA(4)-RuvB(12)-RuvC(2) complex forms which resolves the HJ. Requires Mg(2+) as cofactor.

Its subcellular location is the cytoplasm. It catalyses the reaction Endonucleolytic cleavage at a junction such as a reciprocal single-stranded crossover between two homologous DNA duplexes (Holliday junction).. The RuvA-RuvB-RuvC complex processes Holliday junction (HJ) DNA during genetic recombination and DNA repair. Endonuclease that resolves HJ intermediates. Cleaves cruciform DNA by making single-stranded nicks across the HJ at symmetrical positions within the homologous arms, yielding a 5'-phosphate and a 3'-hydroxyl group; requires a central core of homology in the junction. The consensus cleavage sequence is 5'-(A/T)TT(C/G)-3'. Cleavage occurs on the 3'-side of the TT dinucleotide at the point of strand exchange. HJ branch migration catalyzed by RuvA-RuvB allows RuvC to scan DNA until it finds its consensus sequence, where it cleaves and resolves the cruciform DNA. The chain is Crossover junction endodeoxyribonuclease RuvC from Paenarthrobacter aurescens (strain TC1).